Reading from the N-terminus, the 470-residue chain is Siroheme synthase (470 aa).

Positions 1–201 (MDYFPIFCQL…NDHVQADQHV (201 aa)) are precorrin-2 dehydrogenase /sirohydrochlorin ferrochelatase. NAD(+) contacts are provided by residues 22 to 23 (EI) and 43 to 44 (CE). Serine 128 bears the Phosphoserine mark. A uroporphyrinogen-III C-methyltransferase region spans residues 213–470 (GEVVLVGAGP…KVTECVAHVG (258 aa)). Residue proline 222 coordinates S-adenosyl-L-methionine. The Proton acceptor role is filled by aspartate 245. The active-site Proton donor is lysine 267. S-adenosyl-L-methionine is bound by residues 298–300 (GGD), isoleucine 303, 328–329 (TA), methionine 379, and glycine 408.

The protein in the N-terminal section; belongs to the precorrin-2 dehydrogenase / sirohydrochlorin ferrochelatase family. This sequence in the C-terminal section; belongs to the precorrin methyltransferase family.

The catalysed reaction is uroporphyrinogen III + 2 S-adenosyl-L-methionine = precorrin-2 + 2 S-adenosyl-L-homocysteine + H(+). The enzyme catalyses precorrin-2 + NAD(+) = sirohydrochlorin + NADH + 2 H(+). It carries out the reaction siroheme + 2 H(+) = sirohydrochlorin + Fe(2+). It functions in the pathway cofactor biosynthesis; adenosylcobalamin biosynthesis; precorrin-2 from uroporphyrinogen III: step 1/1. The protein operates within cofactor biosynthesis; adenosylcobalamin biosynthesis; sirohydrochlorin from precorrin-2: step 1/1. Its pathway is porphyrin-containing compound metabolism; siroheme biosynthesis; precorrin-2 from uroporphyrinogen III: step 1/1. It participates in porphyrin-containing compound metabolism; siroheme biosynthesis; siroheme from sirohydrochlorin: step 1/1. It functions in the pathway porphyrin-containing compound metabolism; siroheme biosynthesis; sirohydrochlorin from precorrin-2: step 1/1. Functionally, multifunctional enzyme that catalyzes the SAM-dependent methylations of uroporphyrinogen III at position C-2 and C-7 to form precorrin-2 via precorrin-1. Then it catalyzes the NAD-dependent ring dehydrogenation of precorrin-2 to yield sirohydrochlorin. Finally, it catalyzes the ferrochelation of sirohydrochlorin to yield siroheme. This chain is Siroheme synthase, found in Yersinia pestis.